Here is a 488-residue protein sequence, read N- to C-terminus: Catalase (488 aa).

The interval Met-1 to Ala-24 is disordered. Positions Leu-7–Thr-23 are enriched in polar residues. Catalysis depends on residues His-55 and Asn-128. Tyr-338 lines the heme pocket.

It belongs to the catalase family. It depends on heme as a cofactor.

It is found in the cytoplasm. The enzyme catalyses 2 H2O2 = O2 + 2 H2O. Decomposes hydrogen peroxide into water and oxygen; serves to protect cells from the toxic effects of hydrogen peroxide. This chain is Catalase (kat), found in Listeria innocua serovar 6a (strain ATCC BAA-680 / CLIP 11262).